The following is a 77-amino-acid chain: Large ribosomal subunit protein eL20 (77 aa).

It belongs to the eukaryotic ribosomal protein eL20 family. Part of the 50S ribosomal subunit. Binds 23S rRNA.

This Thermococcus kodakarensis (strain ATCC BAA-918 / JCM 12380 / KOD1) (Pyrococcus kodakaraensis (strain KOD1)) protein is Large ribosomal subunit protein eL20.